The following is a 532-amino-acid chain: Berberine bridge enzyme-like 23 (532 aa).

Residues 1-22 form the signal peptide; that stretch reads MRTLEAFALSLFLVFLVKWVNS. Cysteine 36 and cysteine 102 are disulfide-bonded. Residue asparagine 78 is glycosylated (N-linked (GlcNAc...) asparagine). In terms of domain architecture, FAD-binding PCMH-type spans 80–256; sequence TSQKPILIVT…LSWKVKLVRV (177 aa). Residues 117–180 constitute a cross-link (6-(S-cysteinyl)-8alpha-(pros-histidyl)-FAD (His-Cys)); that stretch reads HDYEGLSYLS…KIHGFPAGTC (64 aa). Asparagine 272 and asparagine 487 each carry an N-linked (GlcNAc...) asparagine glycan.

It belongs to the oxygen-dependent FAD-linked oxidoreductase family. FAD serves as cofactor. The FAD cofactor is bound via a bicovalent 6-S-cysteinyl, 8alpha-N1-histidyl FAD linkage. In terms of tissue distribution, accumulates in cell walls of etiolated hypocotyls.

Its subcellular location is the secreted. It localises to the cell wall. The chain is Berberine bridge enzyme-like 23 from Arabidopsis thaliana (Mouse-ear cress).